The primary structure comprises 574 residues: Membrane protein insertase YidC (574 aa).

6 consecutive transmembrane segments (helical) span residues 6-26, 356-376, 380-400, 447-467, 489-509, and 525-545; these read VFLI…WGKD, FSIM…LHSF, WGWA…PLSA, GGCL…WVLV, PYFI…KLTP, and PLVF…YWVV.

Belongs to the OXA1/ALB3/YidC family. Type 1 subfamily. In terms of assembly, interacts with the Sec translocase complex via SecD. Specifically interacts with transmembrane segments of nascent integral membrane proteins during membrane integration.

The protein resides in the cell inner membrane. Its function is as follows. Required for the insertion and/or proper folding and/or complex formation of integral membrane proteins into the membrane. Involved in integration of membrane proteins that insert both dependently and independently of the Sec translocase complex, as well as at least some lipoproteins. Aids folding of multispanning membrane proteins. In Xanthomonas axonopodis pv. citri (strain 306), this protein is Membrane protein insertase YidC.